Here is a 505-residue protein sequence, read N- to C-terminus: Probable cytochrome P450 28a5 (505 aa).

Cys-450 contributes to the heme binding site.

It belongs to the cytochrome P450 family. The cofactor is heme.

Its subcellular location is the endoplasmic reticulum membrane. It is found in the microsome membrane. Functionally, may be involved in the metabolism of insect hormones and in the breakdown of synthetic insecticides. The polypeptide is Probable cytochrome P450 28a5 (Cyp28a5) (Drosophila melanogaster (Fruit fly)).